We begin with the raw amino-acid sequence, 273 residues long: MTFRNRVGLTSAGGCCCPTLMTINQNVINNDINSPCGATSPYNFDAVVANRASVNPLGFGTRNISVISPASPTYTPTIDDYTGVYLRYNGNPITRPRNYLGNNFLNGGAENIADRTFNNNCNLASRFTNNDLRGYRAVDPNGRMRMYPPVFCDRPCDPCNPYSQSDIPYASELPYGATIPTQLDYPYGAGSIYSRGSQCNIAPVPSIYNYGPPTTFDPYNGNVQAIPIGPYGTTEPNICNPGAYRPDLFYPDRYRMDPNRLDNPRTYWNRLYC.

It localises to the virion. This is an uncharacterized protein from Acanthamoeba polyphaga (Amoeba).